Reading from the N-terminus, the 205-residue chain is MEPKSTTPPPPPPPPVLGAPVPYPPAGAYPPPVGPYAHAPPLYAPPPPAAAAASAAATAASQQAAAAQLQNFWAEQYREIEHTTDFKNHNLPLARIKKIMKADEDVRMIAAEAPVVFARACEMFILELTHRGWAHAEENKRRTLQKSDIAAAIARTEVFDFLVDIVPRDEAKDAEAAAAVAAGIPHPAAGLPATDPMAYYYVQPQ.

The segment at 1–24 (MEPKSTTPPPPPPPPVLGAPVPYP) is disordered.

This sequence belongs to the NFYC/HAP5 subunit family. As to quaternary structure, heterotrimeric transcription factor composed of three components, NF-YA, NF-YB and NF-YC. NF-YB and NF-YC must interact and dimerize for NF-YA association and DNA binding. Interacts with NFYB2. Interacts with NFYB8, NFYB10 and HD5/NFYB11.

The protein resides in the nucleus. It is found in the cytoplasm. Functionally, component of the NF-Y/HAP transcription factor complex. The polypeptide is Nuclear transcription factor Y subunit C-6 (Oryza sativa subsp. japonica (Rice)).